A 357-amino-acid polypeptide reads, in one-letter code: Isoflavone 7-O-methyltransferase (357 aa).

Residues 200-203 (VGGG), aspartate 224, 224-225 (DR), 244-245 (DM), and lysine 258 contribute to the S-adenosyl-L-methionine site. Histidine 262 functions as the Proton acceptor in the catalytic mechanism.

The protein belongs to the class I-like SAM-binding methyltransferase superfamily. Cation-independent O-methyltransferase family. COMT subfamily.

It carries out the reaction a 7-hydroxyisoflavone + S-adenosyl-L-methionine = a 7-methoxyisoflavone + S-adenosyl-L-homocysteine + H(+). In terms of biological role, 7-O-methyltransferase involved in the biosynthesis of isoformononetin. Can use daidzein as substrate, but not medicarpin or 2,7,4'-trihydroxyisoflavanone. This chain is Isoflavone 7-O-methyltransferase (D7OMT), found in Glycyrrhiza echinata (Licorice).